Here is a 198-residue protein sequence, read N- to C-terminus: MAADISESSGADCKGDPRNSAKLDADYPLRVLYCGVCSLPTEYCEYMPDVAKCRQWLEKNFPNEFAKLTVENSPKQEAGISEGQGTAGEEEEKKKQKRGGRGQIKQKKKTVPQKVTIAKIPRAKKKYVTRVCGLATFEIDLKEAQRFFAQKFSCGASVTGEDEIIIQGDFTDDIIDVIQEKWPEVDDDSIEDLGEVKK.

At Ala2 the chain carries N-acetylalanine. Residues Ser20 and Ser73 each carry the phosphoserine modification. The segment at 72–110 is disordered; that stretch reads NSPKQEAGISEGQGTAGEEEEKKKQKRGGRGQIKQKKKT. Position 86 is a phosphothreonine (Thr86). A compositionally biased stretch (basic residues) spans 95–110; sequence KQKRGGRGQIKQKKKT. Residues 115–182 enclose the SUI1 domain; that stretch reads VTIAKIPRAK…DIIDVIQEKW (68 aa). A Phosphoserine modification is found at Ser189.

It belongs to the DENR family. Interacts with MCTS1 (via PUA domain); the complex regulates translation reinitiation. As to expression, highly expressed in heart and skeletal muscle and moderately expressed in the brain, placenta, liver and pancreas. Weakly expressed in the lung and kidney.

It localises to the cytoplasm. Translation regulator forming a complex with MCTS1 to promote translation reinitiation. Translation reinitiation is the process where the small ribosomal subunit remains attached to the mRNA following termination of translation of a regulatory upstream ORF (uORF), and resume scanning on the same mRNA molecule to initiate translation of a downstream ORF, usually the main ORF (mORF). The MCTS1/DENR complex is pivotal to two linked mechanisms essential for translation reinitiation. Firstly, the dissociation of deacylated tRNAs from post-termination 40S ribosomal complexes during ribosome recycling. Secondly, the recruitment in an EIF2-independent manner of aminoacylated initiator tRNA to P site of 40S ribosomes for a new round of translation. This regulatory mechanism governs the translation of more than 150 genes which translation reinitiation is MCTS1/DENR complex-dependent. The chain is Density-regulated protein (DENR) from Homo sapiens (Human).